Here is a 142-residue protein sequence, read N- to C-terminus: Large ribosomal subunit protein uL11 (142 aa).

It belongs to the universal ribosomal protein uL11 family. Part of the ribosomal stalk of the 50S ribosomal subunit. Interacts with L10 and the large rRNA to form the base of the stalk. L10 forms an elongated spine to which L12 dimers bind in a sequential fashion forming a multimeric L10(L12)X complex. One or more lysine residues are methylated.

In terms of biological role, forms part of the ribosomal stalk which helps the ribosome interact with GTP-bound translation factors. The sequence is that of Large ribosomal subunit protein uL11 from Aeromonas hydrophila subsp. hydrophila (strain ATCC 7966 / DSM 30187 / BCRC 13018 / CCUG 14551 / JCM 1027 / KCTC 2358 / NCIMB 9240 / NCTC 8049).